Reading from the N-terminus, the 231-residue chain is Orotidine 5'-phosphate decarboxylase (231 aa).

Substrate-binding positions include aspartate 11, lysine 33, 60–69, threonine 120, arginine 181, glutamine 190, glycine 210, and arginine 211; that span reads DLKFHDIPNT. Lysine 62 (proton donor) is an active-site residue.

Belongs to the OMP decarboxylase family. Type 1 subfamily. As to quaternary structure, homodimer.

It catalyses the reaction orotidine 5'-phosphate + H(+) = UMP + CO2. Its pathway is pyrimidine metabolism; UMP biosynthesis via de novo pathway; UMP from orotate: step 2/2. Functionally, catalyzes the decarboxylation of orotidine 5'-monophosphate (OMP) to uridine 5'-monophosphate (UMP). This chain is Orotidine 5'-phosphate decarboxylase, found in Photobacterium profundum (strain SS9).